We begin with the raw amino-acid sequence, 295 residues long: Probable protein phosphatase 2C 5 (295 aa).

In terms of domain architecture, PPM-type phosphatase spans 23–294 (QYAATHMQGW…DNMTCILVLF (272 aa)). Residues D57 and G58 each contribute to the Mn(2+) site. Residues 151-170 (NRDGKPFDMSKDHKPDDDQE) form a disordered region. Residues D237 and D285 each coordinate Mn(2+).

The protein belongs to the PP2C family. The cofactor is Mg(2+). Mn(2+) is required as a cofactor.

It is found in the membrane. The enzyme catalyses O-phospho-L-seryl-[protein] + H2O = L-seryl-[protein] + phosphate. It carries out the reaction O-phospho-L-threonyl-[protein] + H2O = L-threonyl-[protein] + phosphate. Functionally, enzyme with a broad specificity. The chain is Probable protein phosphatase 2C 5 from Paramecium tetraurelia.